The following is a 123-amino-acid chain: Probable U6 snRNA-associated Sm-like protein LSm4 (123 aa).

The Sm domain occupies 3–76; the sequence is LPLSLLKTAQ…IKYLRIPETV (74 aa). The segment covering 85–97 has biased composition (basic and acidic residues); the sequence is NEVRRQQQREQSR. Residues 85 to 123 are disordered; that stretch reads NEVRRQQQREQSRGRGGGRGGRGGHRGGGGNRGGRGGAR. The segment covering 98–123 has biased composition (gly residues); sequence GRGGGRGGRGGHRGGGGNRGGRGGAR.

This sequence belongs to the snRNP Sm proteins family. Component of the precatalytic spliceosome (spliceosome B complex). Component of the U4/U6-U5 tri-snRNP complex, a building block of the precatalytic spliceosome (spliceosome B complex). LSM2, LSM3, LSM4, LSM5, LSM6, LSM7 and LSM8 form a heptameric, ring-shaped subcomplex (the LSM2-8 complex) that is part of the U4/U6-U5 tri-snRNP complex and the precatalytic spliceosome.

The protein resides in the nucleus. Its function is as follows. Plays a role in pre-mRNA splicing as component of the U4/U6-U5 tri-snRNP complex that is involved in spliceosome assembly, and as component of the precatalytic spliceosome (spliceosome B complex). The heptameric LSM2-8 complex binds specifically to the 3'-terminal U-tract of U6 snRNA. The chain is Probable U6 snRNA-associated Sm-like protein LSm4 (lsm-4) from Caenorhabditis elegans.